We begin with the raw amino-acid sequence, 320 residues long: Nucleotide-binding protein Psyc_0118 (320 aa).

Position 32–39 (32–39 (GRSGSGKT)) interacts with ATP. Residue 82–85 (DIRT) participates in GTP binding.

It belongs to the RapZ-like family.

Functionally, displays ATPase and GTPase activities. In Psychrobacter arcticus (strain DSM 17307 / VKM B-2377 / 273-4), this protein is Nucleotide-binding protein Psyc_0118.